The following is a 575-amino-acid chain: Hemagglutinin-neuraminidase (575 aa).

Positions Met1–Ser10 are enriched in basic and acidic residues. Residues Met1–Ala24 are disordered. Residues Met1–Leu37 lie on the Intravirion side of the membrane. The interval Ser10 to Thr14 is incorporation in virion. Residues Tyr11–Leu23 are compositionally biased toward polar residues. A helical membrane pass occupies residues Leu38–Ile58. Residues Ser59 to Ser140 form an involved in interaction with F protein region. Over Ser59–Ser575 the chain is Virion surface. An N-linked (GlcNAc...) asparagine; by host glycan is attached at Asn77. Cystine bridges form between Cys192/Cys216, Cys258/Cys271, Cys357/Cys469, and Cys463/Cys473. Residues Asn254–Ser259 form an involved in neuraminidase activity region. Residues Asn499 and Asn511 are each glycosylated (N-linked (GlcNAc...) asparagine; by host). Cys535 and Cys544 are disulfide-bonded.

Belongs to the paramyxoviruses hemagglutinin-neuraminidase family. As to quaternary structure, homotetramer; composed of disulfide-linked homodimers. Interacts with F protein trimer. N-glycosylated; glycans consist of a mixture of high mannose-type oligosaccharides and of complex-type oligosaccharides.

It localises to the virion membrane. Its subcellular location is the host cell membrane. The catalysed reaction is Hydrolysis of alpha-(2-&gt;3)-, alpha-(2-&gt;6)-, alpha-(2-&gt;8)- glycosidic linkages of terminal sialic acid residues in oligosaccharides, glycoproteins, glycolipids, colominic acid and synthetic substrates.. Functionally, attaches the virus to sialic acid-containing cell receptors and thereby initiating infection. Binding of HN protein to the receptor induces a conformational change that allows the F protein to trigger virion/cell membranes fusion. Neuraminidase activity ensures the efficient spread of the virus by dissociating the mature virions from the neuraminic acid containing glycoproteins. The sequence is that of Hemagglutinin-neuraminidase (HN) from Sendai virus (strain Fushimi) (SeV).